A 61-amino-acid chain; its full sequence is Photosystem II reaction center X protein (61 aa).

A helical membrane pass occupies residues 26–46 (IGSFIAAALLIVIPATAFLIF).

The protein belongs to the PsbX family. Type 2 subfamily. In terms of assembly, PSII consists of a core antenna complex that captures photons, and an electron transfer chain that converts photonic excitation into a charge separation. PSII forms dimeric complexes.

The protein resides in the cellular thylakoid membrane. In terms of biological role, involved in the binding and/or turnover of quinones at the Q(B) site of Photosystem II. This Prochlorococcus marinus (strain MIT 9215) protein is Photosystem II reaction center X protein.